The following is a 484-amino-acid chain: Calcium uniporter protein, mitochondrial (484 aa).

The N-terminal 33 residues, 1-33 (MGHVLGGTLLAANRLARPPAVVLGKPRVCCWRA), are a transit peptide targeting the mitochondrion. Topologically, residues 34–304 (SPWPVIVSSA…CDLLAHKGAH (271 aa)) are mitochondrial matrix. 2 disordered regions span residues 59–104 (ARYE…KGRL) and 188–227 (YTGGNKSNDGRREESNGNGSNVASYSGLGREGPSKGDTHW). The span at 61–82 (YEARGRSTTQRKVDDRPWHRES) shows a compositional bias: basic and acidic residues. A compositionally biased stretch (polar residues) spans 83-93 (SGSLPKSTSPD). The chain crosses the membrane as a helical span at residues 305 to 326 (ALAKGGFAALAAWWGIVYYVTF). The Mitochondrial intermembrane portion of the chain corresponds to 327-334 (HTDMGWDL). The Selectivity filter signature appears at 332-340 (WDLVEPITY). A helical transmembrane segment spans residues 335–355 (VEPITYLAGLASIMGGYLWFL). Ca(2+) is bound at residue glutamate 336. Topologically, residues 356–484 (FISRDLSYKA…NEAAANVPGD (129 aa)) are mitochondrial matrix. Composition is skewed to basic and acidic residues over residues 426–435 (KEVLEEEKGG) and 452–462 (DHDHDHDHVSH). The disordered stretch occupies residues 426-484 (KEVLEEEKGGKARKREQEDEDGDGDDDHDHDHDHVSHGAELQGQDILHANEAAANVPGD).

It belongs to the MCU (TC 1.A.77) family. In terms of assembly, homotetramer, assembles in a dimer or dimers configuration with two interfaces.

It localises to the mitochondrion inner membrane. It catalyses the reaction Ca(2+)(in) = Ca(2+)(out). With respect to regulation, inhibited by ruthenium red or its derivative Ru360. Highly selective calcium channel localized to the inner mitochondrial membrane, which mediates calcium uptake into the mitochondrial matrix. Mitochondrial calcium homeostasis plays key roles in cellular physiology and regulates ATP production, cytoplasmic calcium signals and activation of cell death pathways. Sufficient to operate as a pore-forming channel without the need of calcium-sensor or auxiliary subunit. This is Calcium uniporter protein, mitochondrial from Metarhizium acridum (strain CQMa 102).